Reading from the N-terminus, the 167-residue chain is HVA22-like protein b (167 aa).

The next 3 membrane-spanning stretches (helical) occupy residues 18–38 (VIAG…RAIE), 47–67 (QWLT…TFFR), and 68–88 (LLEW…WLVL).

It belongs to the DP1 family. In terms of tissue distribution, predominantly expressed in flower buds.

It is found in the membrane. The sequence is that of HVA22-like protein b (HVA22B) from Arabidopsis thaliana (Mouse-ear cress).